A 596-amino-acid polypeptide reads, in one-letter code: Isocitrate dehydrogenase kinase/phosphatase (596 aa).

ATP-binding positions include 316 to 322 (APGIRGM) and Lys-337. Residue Asp-372 is part of the active site.

Belongs to the AceK family.

It is found in the cytoplasm. The catalysed reaction is L-seryl-[isocitrate dehydrogenase] + ATP = O-phospho-L-seryl-[isocitrate dehydrogenase] + ADP + H(+). Bifunctional enzyme which can phosphorylate or dephosphorylate isocitrate dehydrogenase (IDH) on a specific serine residue. This is a regulatory mechanism which enables bacteria to bypass the Krebs cycle via the glyoxylate shunt in response to the source of carbon. When bacteria are grown on glucose, IDH is fully active and unphosphorylated, but when grown on acetate or ethanol, the activity of IDH declines drastically concomitant with its phosphorylation. The sequence is that of Isocitrate dehydrogenase kinase/phosphatase from Cronobacter sakazakii (strain ATCC BAA-894) (Enterobacter sakazakii).